The sequence spans 351 residues: Lipopolysaccharide core biosynthesis mannosyltransferase LpsB (351 aa).

It belongs to the glycosyltransferase group 1 family. Glycosyltransferase 4 subfamily.

The protein operates within bacterial outer membrane biogenesis; LPS core biosynthesis. Functionally, acts at transfer of mannose group to a 3-deoxy-D-mono octulonic acid (KDO) via an alpha-1,5 linkage. This is Lipopolysaccharide core biosynthesis mannosyltransferase LpsB (lpsB) from Rhizobium meliloti (strain 1021) (Ensifer meliloti).